The following is a 433-amino-acid chain: Ribosomal RNA small subunit methyltransferase B (433 aa).

S-adenosyl-L-methionine-binding positions include 254–260 (CAAPGGK), Asp-277, Asp-303, and Asp-322. The active-site Nucleophile is the Cys-375.

This sequence belongs to the class I-like SAM-binding methyltransferase superfamily. RsmB/NOP family.

It is found in the cytoplasm. It catalyses the reaction cytidine(967) in 16S rRNA + S-adenosyl-L-methionine = 5-methylcytidine(967) in 16S rRNA + S-adenosyl-L-homocysteine + H(+). Specifically methylates the cytosine at position 967 (m5C967) of 16S rRNA. In Sodalis glossinidius (strain morsitans), this protein is Ribosomal RNA small subunit methyltransferase B.